A 173-amino-acid chain; its full sequence is Large ribosomal subunit protein uL16 (173 aa).

This sequence belongs to the universal ribosomal protein uL16 family.

The sequence is that of Large ribosomal subunit protein uL16 from Methanococcus aeolicus (strain ATCC BAA-1280 / DSM 17508 / OCM 812 / Nankai-3).